The chain runs to 262 residues: Small ribosomal subunit protein eS4 (262 aa).

The S4 RNA-binding domain maps to 42–105 (LPLXVFLRNR…NEHFRLAYDV (64 aa)).

The protein belongs to the eukaryotic ribosomal protein eS4 family.

The protein is Small ribosomal subunit protein eS4 (RPS4) of Candida albicans (Yeast).